Reading from the N-terminus, the 162-residue chain is Phosphopantetheine adenylyltransferase (162 aa).

Thr-9 is a binding site for substrate. Residues 9-10 (TF) and His-17 each bind ATP. Substrate contacts are provided by Lys-41, Leu-77, and Arg-91. Residues 92–94 (GLR), Glu-102, and 127–133 (RQAIASK) each bind ATP.

It belongs to the bacterial CoaD family. In terms of assembly, homohexamer. The cofactor is Mg(2+).

It is found in the cytoplasm. It catalyses the reaction (R)-4'-phosphopantetheine + ATP + H(+) = 3'-dephospho-CoA + diphosphate. It functions in the pathway cofactor biosynthesis; coenzyme A biosynthesis; CoA from (R)-pantothenate: step 4/5. Its function is as follows. Reversibly transfers an adenylyl group from ATP to 4'-phosphopantetheine, yielding dephospho-CoA (dPCoA) and pyrophosphate. This is Phosphopantetheine adenylyltransferase from Cereibacter sphaeroides (strain ATCC 17025 / ATH 2.4.3) (Rhodobacter sphaeroides).